Consider the following 294-residue polypeptide: MRLKSIMCAALFVVAGQAAAQEKSITIATEGAYAPWNFSGPNGKLDGFEIDLAKVLCERMKVKCQIVAQNWDGIIPSLVAKKYDVIMAAMSVTPKRQEVISFSTPYGAHMNGFAVMKDSKLADMPGSGEVYSLNTQADAAKKRIDDVNAFLDGTTVGVQGSTTGSQFLENYFKNSVDIKEYKTVEEFNIDLMSGRVDAVFASATVLTAAFEQPDMKDAKVVGPLFSGDELGKVAVGLRKDDAALKAEFRLGAVGLRKEDAALKADFDSSIKAVADEGTIKTLSSKWFKVDVTPH.

The N-terminal stretch at 1–20 (MRLKSIMCAALFVVAGQAAA) is a signal peptide. Cysteines 57 and 64 form a disulfide.

It belongs to the bacterial solute-binding protein 3 family.

The protein localises to the periplasm. Functionally, component of the octopine active transport system probably consisting of four subunits: Q, M, P and T. In Rhizobium meliloti (Ensifer meliloti), this protein is Octopine-binding periplasmic protein (occT).